Here is a 333-residue protein sequence, read N- to C-terminus: Tetraacyldisaccharide 4'-kinase (333 aa).

ATP is bound at residue 57-64 (IVGGAGKT).

The protein belongs to the LpxK family.

The enzyme catalyses a lipid A disaccharide + ATP = a lipid IVA + ADP + H(+). Its pathway is glycolipid biosynthesis; lipid IV(A) biosynthesis; lipid IV(A) from (3R)-3-hydroxytetradecanoyl-[acyl-carrier-protein] and UDP-N-acetyl-alpha-D-glucosamine: step 6/6. Functionally, transfers the gamma-phosphate of ATP to the 4'-position of a tetraacyldisaccharide 1-phosphate intermediate (termed DS-1-P) to form tetraacyldisaccharide 1,4'-bis-phosphate (lipid IVA). In Dechloromonas aromatica (strain RCB), this protein is Tetraacyldisaccharide 4'-kinase.